We begin with the raw amino-acid sequence, 428 residues long: MPGIVLIGAQWGDEGKGKATDLIGTKVDYVARFNGGNNAGHSVVVGDESYALHLLPSGIINPNLTPVIGNGVVVDPEVLFEEIDGLESRGIDCSHLKVSEAAHIIAPYHRTLDKVTERFLGKHKIGTTGRGIGPAYADKINRVGIRVHDLFNADHLHDKVEASLHQKNQMLVKLYNRRPIDVDQTTEELLKLGERLKPYVANTGLILNKALDEGKTVLFEGAQATMLDVDHGTYPFVTSSNPTAGGACTGTGVGPTKITRVIGVSKAYVTRVGEGPFPTELLDESGEWLRQQGHEFGVTTGRPRRCGWFDAVVNRYASQVNGLTDIVLTKLDVLTGLKEIPICVAYDVDGERHDDMPTDQAAFAAAKPIYETMPGWDEDISDCHSFDELPATCQAYVKRLEELSGCRISAIGTGPQRDHVIQINSLVD.

Residues 12–18 (GDEGKGK) and 40–42 (GHS) contribute to the GTP site. The active-site Proton acceptor is Asp13. Asp13 and Gly40 together coordinate Mg(2+). Residues 13–16 (DEGK), 38–41 (NAGH), Thr128, Arg142, Gln223, Thr238, and Arg302 contribute to the IMP site. The Proton donor role is filled by His41. 298 to 304 (VTTGRPR) is a substrate binding site. GTP-binding positions include Arg304, 330–332 (KLD), and 412–414 (GTG).

This sequence belongs to the adenylosuccinate synthetase family. As to quaternary structure, homodimer. The cofactor is Mg(2+).

The protein resides in the cytoplasm. The enzyme catalyses IMP + L-aspartate + GTP = N(6)-(1,2-dicarboxyethyl)-AMP + GDP + phosphate + 2 H(+). It functions in the pathway purine metabolism; AMP biosynthesis via de novo pathway; AMP from IMP: step 1/2. Plays an important role in the de novo pathway of purine nucleotide biosynthesis. Catalyzes the first committed step in the biosynthesis of AMP from IMP. The polypeptide is Adenylosuccinate synthetase (Bifidobacterium longum (strain DJO10A)).